A 105-amino-acid polypeptide reads, in one-letter code: Met repressor (105 aa).

This sequence belongs to the MetJ family. In terms of assembly, homodimer.

Its subcellular location is the cytoplasm. This regulatory protein, when combined with SAM (S-adenosylmethionine) represses the expression of the methionine regulon and of enzymes involved in SAM synthesis. The polypeptide is Met repressor (Erwinia tasmaniensis (strain DSM 17950 / CFBP 7177 / CIP 109463 / NCPPB 4357 / Et1/99)).